A 513-amino-acid polypeptide reads, in one-letter code: MAEASVDIGTQPVTVKKKKSLSIEEKIDIINAVESGKKKAEIAAEYGIKKNSLSSIMKNKDKVLEAFESLRFDPKRKRLRTAFYTDLEEALMRWYRIAQCLNVPVNGPMLRLKANDFAQKLGHNDFKCSNGWLDRFKSRYGLVFRAQPVEATGISIDPSTVWYQNVLPYYLNDYHPKNVFNVKETGLLYRMLPTNTFAFKGETCSVGKLCKDRITLALGTNMDGSEKLPLLIIGKNRAPRCFKGIKSLPVYYEANRTAWMTAAIFEQWMQKLDEKFQAQKRRVVIFVDSCPAHPEVKNLKSIELAFFPSCLSSGFAAMNQGVIKSLKIKYRHCLIKKFLSSVESSKEFTFSLLDAVDTLHLCWRAVTPETIVKSYEEAGFRSPKGENDTANADAAVALDLTAHAVGAGVEFLEGLSIEEYAALDEDLETCEATQKDDAEWAGESKQDETGLYTSDEEEEDSGALEVDLPSPSKKDALSAVGTLKRFLRSHDLNDELHGSLADLENFINALSPK.

Positions 12-63 (PVTVKKKKSLSIEEKIDIINAVESGKKKAEIAAEYGIKKNSLSSIMKNKDKV) constitute an HTH psq-type domain. 2 DNA-binding regions (H-T-H motif) span residues 39-59 (KAEI…IMKN) and 108-139 (PMLR…FKSR). Residues 75 to 146 (KRKRLRTAFY…KSRYGLVFRA (72 aa)) enclose the HTH CENPB-type domain. The DDE-1 domain maps to 174-375 (YHPKNVFNVK…VTPETIVKSY (202 aa)). A compositionally biased stretch (basic and acidic residues) spans 433 to 448 (TQKDDAEWAGESKQDE). The interval 433–473 (TQKDDAEWAGESKQDETGLYTSDEEEEDSGALEVDLPSPSK) is disordered.

This sequence belongs to the tigger transposable element derived protein family.

The protein localises to the nucleus. In Mus musculus (Mouse), this protein is Tigger transposable element-derived protein 4 (Tigd4).